Here is a 322-residue protein sequence, read N- to C-terminus: Probable F-box protein At1g60180 (322 aa).

The region spanning 45-88 (FCELSDECIAKILSGCPILESLTLSHCIYLTVLDLSKSLRLRTL) is the F-box domain.

The protein is Probable F-box protein At1g60180 of Arabidopsis thaliana (Mouse-ear cress).